A 213-amino-acid chain; its full sequence is Orotate phosphoribosyltransferase (213 aa).

Residue Lys26 participates in 5-phospho-alpha-D-ribose 1-diphosphate binding. Phe34 to Phe35 provides a ligand contact to orotate. Residues Tyr72–Lys73, Arg99, Lys100, Lys103, His105, and Asp124–Ala132 contribute to the 5-phospho-alpha-D-ribose 1-diphosphate site. Residues Thr128 and Arg156 each coordinate orotate.

The protein belongs to the purine/pyrimidine phosphoribosyltransferase family. PyrE subfamily. As to quaternary structure, homodimer. Mg(2+) is required as a cofactor.

It catalyses the reaction orotidine 5'-phosphate + diphosphate = orotate + 5-phospho-alpha-D-ribose 1-diphosphate. The protein operates within pyrimidine metabolism; UMP biosynthesis via de novo pathway; UMP from orotate: step 1/2. Functionally, catalyzes the transfer of a ribosyl phosphate group from 5-phosphoribose 1-diphosphate to orotate, leading to the formation of orotidine monophosphate (OMP). This is Orotate phosphoribosyltransferase from Shigella flexneri.